The primary structure comprises 256 residues: Hydroxyacylglutathione hydrolase (256 aa).

Zn(2+)-binding residues include H57, H59, D61, H62, H115, D134, and H172.

This sequence belongs to the metallo-beta-lactamase superfamily. Glyoxalase II family. In terms of assembly, monomer. Zn(2+) is required as a cofactor.

The catalysed reaction is an S-(2-hydroxyacyl)glutathione + H2O = a 2-hydroxy carboxylate + glutathione + H(+). It functions in the pathway secondary metabolite metabolism; methylglyoxal degradation; (R)-lactate from methylglyoxal: step 2/2. Its function is as follows. Thiolesterase that catalyzes the hydrolysis of S-D-lactoyl-glutathione to form glutathione and D-lactic acid. The protein is Hydroxyacylglutathione hydrolase of Rhizobium johnstonii (strain DSM 114642 / LMG 32736 / 3841) (Rhizobium leguminosarum bv. viciae).